Consider the following 357-residue polypeptide: UDP-N-acetylglucosamine--N-acetylmuramyl-(pentapeptide) pyrophosphoryl-undecaprenol N-acetylglucosamine transferase (357 aa).

Residues 13-15, Asn125, Arg161, Ser189, Ile243, and Gln288 each bind UDP-N-acetyl-alpha-D-glucosamine; that span reads TGG.

Belongs to the glycosyltransferase 28 family. MurG subfamily.

It localises to the cell inner membrane. The catalysed reaction is di-trans,octa-cis-undecaprenyl diphospho-N-acetyl-alpha-D-muramoyl-L-alanyl-D-glutamyl-meso-2,6-diaminopimeloyl-D-alanyl-D-alanine + UDP-N-acetyl-alpha-D-glucosamine = di-trans,octa-cis-undecaprenyl diphospho-[N-acetyl-alpha-D-glucosaminyl-(1-&gt;4)]-N-acetyl-alpha-D-muramoyl-L-alanyl-D-glutamyl-meso-2,6-diaminopimeloyl-D-alanyl-D-alanine + UDP + H(+). It functions in the pathway cell wall biogenesis; peptidoglycan biosynthesis. Functionally, cell wall formation. Catalyzes the transfer of a GlcNAc subunit on undecaprenyl-pyrophosphoryl-MurNAc-pentapeptide (lipid intermediate I) to form undecaprenyl-pyrophosphoryl-MurNAc-(pentapeptide)GlcNAc (lipid intermediate II). This is UDP-N-acetylglucosamine--N-acetylmuramyl-(pentapeptide) pyrophosphoryl-undecaprenol N-acetylglucosamine transferase from Bordetella pertussis (strain Tohama I / ATCC BAA-589 / NCTC 13251).